A 456-amino-acid polypeptide reads, in one-letter code: RuvB-like helicase 1 (456 aa).

70-77 (GPPGTGKT) is an ATP binding site.

Belongs to the RuvB family. Forms homohexameric rings. May form a dodecamer with rept made of two stacked hexameric rings. Component of the chromatin remodeling Ino80 complex.

Its subcellular location is the nucleus. It catalyses the reaction ATP + H2O = ADP + phosphate + H(+). Acts as a transcriptional coactivator in Wg signaling caused by altered arm signaling. Pont and rept interfere antagonistically with nuclear arm signaling function, and are required to enhance or reduce arm activity, respectively. Also an essential cofactor for the normal function of Myc; required for cellular proliferation and growth. Functionally, proposed core component of the chromatin remodeling Ino80 complex which is involved in transcriptional regulation, DNA replication and probably DNA repair. This is RuvB-like helicase 1 from Drosophila pseudoobscura pseudoobscura (Fruit fly).